Consider the following 825-residue polypeptide: Phenylalanine--tRNA ligase beta subunit (825 aa).

The tRNA-binding domain maps to 39–154 (RSWAEGVVLG…KAHPLGSDAR (116 aa)). The B5 domain occupies 411–506 (PLERTLKLRL…RLYGYDRFSE (96 aa)). Asp484, Asp490, Glu493, and Glu494 together coordinate Mg(2+). An FDX-ACB domain is found at 731–824 (SPFPASDRDI…LEKHFPVTLR (94 aa)).

The protein belongs to the phenylalanyl-tRNA synthetase beta subunit family. Type 1 subfamily. In terms of assembly, tetramer of two alpha and two beta subunits. Mg(2+) serves as cofactor.

Its subcellular location is the cytoplasm. It carries out the reaction tRNA(Phe) + L-phenylalanine + ATP = L-phenylalanyl-tRNA(Phe) + AMP + diphosphate + H(+). In Synechococcus sp. (strain JA-3-3Ab) (Cyanobacteria bacterium Yellowstone A-Prime), this protein is Phenylalanine--tRNA ligase beta subunit.